A 77-amino-acid polypeptide reads, in one-letter code: Large ribosomal subunit protein uL29 (77 aa).

It belongs to the universal ribosomal protein uL29 family.

The polypeptide is Large ribosomal subunit protein uL29 (Mycobacterium sp. (strain JLS)).